The following is a 237-amino-acid chain: MTYSRVLLKLSGEALMGTQGYGIDPAIVNSIASDVAKVVAGGTELAIVVGGGNIFRGLKGSAAGMERATADYVGMLATVMNAITLQDGLERAGVPTRVQTAIAMQEVAEPYIRRKAMRHLEKGRVVVFGAGCGNPFFTTDTTAALRAAEINADVVFKATKVDGVYDKDPAKHADAVKHAHLTYQDVLSGELAVMDSTAIALCKDNNIPIVVFNLFEPGNIGRAVAGEPIGSRIGNPA.

Residue 9-12 (KLSG) participates in ATP binding. The segment at 17–22 (GTQGYG) is involved in allosteric activation by GTP. Position 51 (G51) interacts with UMP. Residues G52 and R56 each contribute to the ATP site. Residues D71 and 132–139 (CGNPFFTT) each bind UMP. T159, Y165, and D168 together coordinate ATP.

It belongs to the UMP kinase family. As to quaternary structure, homohexamer.

It is found in the cytoplasm. It carries out the reaction UMP + ATP = UDP + ADP. Its pathway is pyrimidine metabolism; CTP biosynthesis via de novo pathway; UDP from UMP (UMPK route): step 1/1. With respect to regulation, allosterically activated by GTP. Inhibited by UTP. Catalyzes the reversible phosphorylation of UMP to UDP. The protein is Uridylate kinase of Parasynechococcus marenigrum (strain WH8102).